The primary structure comprises 616 residues: Proline--tRNA ligase (616 aa).

It belongs to the class-II aminoacyl-tRNA synthetase family. ProS type 1 subfamily. As to quaternary structure, homodimer.

The protein resides in the cytoplasm. The catalysed reaction is tRNA(Pro) + L-proline + ATP = L-prolyl-tRNA(Pro) + AMP + diphosphate. Functionally, catalyzes the attachment of proline to tRNA(Pro) in a two-step reaction: proline is first activated by ATP to form Pro-AMP and then transferred to the acceptor end of tRNA(Pro). As ProRS can inadvertently accommodate and process non-cognate amino acids such as alanine and cysteine, to avoid such errors it has two additional distinct editing activities against alanine. One activity is designated as 'pretransfer' editing and involves the tRNA(Pro)-independent hydrolysis of activated Ala-AMP. The other activity is designated 'posttransfer' editing and involves deacylation of mischarged Ala-tRNA(Pro). The misacylated Cys-tRNA(Pro) is not edited by ProRS. The sequence is that of Proline--tRNA ligase from Streptococcus mutans serotype c (strain ATCC 700610 / UA159).